The primary structure comprises 33 residues: Protein YdgV (33 aa).

The sequence is that of Protein YdgV from Escherichia coli (strain K12).